Here is a 160-residue protein sequence, read N- to C-terminus: Phosphopantetheine adenylyltransferase (160 aa).

Serine 8 is a substrate binding site. Residues 8–9 (SF) and histidine 16 each bind ATP. Substrate contacts are provided by lysine 40, threonine 72, and arginine 86. ATP is bound by residues 87 to 89 (GLR), glutamate 97, and 122 to 128 (YSFLSSS).

Belongs to the bacterial CoaD family. In terms of assembly, homohexamer. Requires Mg(2+) as cofactor.

The protein resides in the cytoplasm. It catalyses the reaction (R)-4'-phosphopantetheine + ATP + H(+) = 3'-dephospho-CoA + diphosphate. It functions in the pathway cofactor biosynthesis; coenzyme A biosynthesis; CoA from (R)-pantothenate: step 4/5. Functionally, reversibly transfers an adenylyl group from ATP to 4'-phosphopantetheine, yielding dephospho-CoA (dPCoA) and pyrophosphate. This is Phosphopantetheine adenylyltransferase from Synechococcus sp. (strain CC9311).